A 222-amino-acid chain; its full sequence is Beta-casein (222 aa).

Positions M1 to A15 are cleaved as a signal peptide. T27 carries the post-translational modification Phosphothreonine. Phosphoserine occurs at positions 30, 32, 33, and 34.

The protein belongs to the beta-casein family. As to expression, mammary gland specific. Secreted in milk.

It is found in the secreted. Important role in determination of the surface properties of the casein micelles. The sequence is that of Beta-casein (CSN2) from Capra hircus (Goat).